A 198-amino-acid chain; its full sequence is MIVVLRLGHRPERDKRVTTHVALTARAFGADGIIIVSEEVDLKVKESVEDVVERWGGPFFVKFEKSWRKVMKEFDGVKVHLTMYGIHIDDIIDELREKLREGRDFMVIVGAEKVPREVYELADYNVAIGNQPHSEVAALAVFLDRLLEGKGLRKEFKGAKLKIIPQARGKMVVEVQKDAKQAEASGEGASRKNGQLPS.

S-adenosyl-L-methionine is bound by residues Leu-81, 110–114 (GAEKV), and 128–135 (IGNQPHSE). A disordered region spans residues 178–198 (DAKQAEASGEGASRKNGQLPS).

This sequence belongs to the aTrm56 family. In terms of assembly, homodimer.

The protein resides in the cytoplasm. It carries out the reaction cytidine(56) in tRNA + S-adenosyl-L-methionine = 2'-O-methylcytidine(56) in tRNA + S-adenosyl-L-homocysteine + H(+). In terms of biological role, specifically catalyzes the AdoMet-dependent 2'-O-ribose methylation of cytidine at position 56 in tRNAs. In Pyrococcus abyssi (strain GE5 / Orsay), this protein is tRNA (cytidine(56)-2'-O)-methyltransferase.